A 445-amino-acid polypeptide reads, in one-letter code: UDP-N-acetylmuramoylalanine--D-glutamate ligase (445 aa).

110 to 116 (GSNGKTT) contacts ATP.

It belongs to the MurCDEF family.

It localises to the cytoplasm. It catalyses the reaction UDP-N-acetyl-alpha-D-muramoyl-L-alanine + D-glutamate + ATP = UDP-N-acetyl-alpha-D-muramoyl-L-alanyl-D-glutamate + ADP + phosphate + H(+). It functions in the pathway cell wall biogenesis; peptidoglycan biosynthesis. Its function is as follows. Cell wall formation. Catalyzes the addition of glutamate to the nucleotide precursor UDP-N-acetylmuramoyl-L-alanine (UMA). This chain is UDP-N-acetylmuramoylalanine--D-glutamate ligase, found in Christiangramia forsetii (strain DSM 17595 / CGMCC 1.15422 / KT0803) (Gramella forsetii).